The following is a 56-amino-acid chain: MAKEKATLPPTGAGLMRFFDEDTRAVKVSPKGVIALTLLLIAFEFILHMFGSSIFG.

The Cytoplasmic portion of the chain corresponds to 1-29 (MAKEKATLPPTGAGLMRFFDEDTRAVKVS). Residues 30–49 (PKGVIALTLLLIAFEFILHM) form a helical membrane-spanning segment. Over 50–56 (FGSSIFG) the chain is Extracellular.

Belongs to the SEC61-beta family. Component of the protein translocase complex. Heterotrimer consisting of alpha (SecY), beta (SecG) and gamma (SecE) subunits. Can form oligomers of the heterotrimer.

The protein localises to the cell membrane. Involved in protein export. The function of the beta subunit is unknown, but it may be involved in stabilization of the trimeric complex. This chain is Preprotein translocase subunit SecG, found in Thermococcus kodakarensis (strain ATCC BAA-918 / JCM 12380 / KOD1) (Pyrococcus kodakaraensis (strain KOD1)).